The following is a 127-amino-acid chain: Thioredoxin (127 aa).

Residues 2-115 (SDGVKHINSA…LRAAAEKMGR (114 aa)) enclose the Thioredoxin domain. Catalysis depends on nucleophile residues Cys33 and Cys36. Cys33 and Cys36 are joined by a disulfide.

The protein belongs to the thioredoxin family.

In terms of biological role, participates in various redox reactions through the reversible oxidation of its active center dithiol to a disulfide and catalyzes dithiol-disulfide exchange reactions. This chain is Thioredoxin (trx), found in Neurospora crassa (strain ATCC 24698 / 74-OR23-1A / CBS 708.71 / DSM 1257 / FGSC 987).